We begin with the raw amino-acid sequence, 768 residues long: Eukaryotic elongation factor 2 kinase (768 aa).

The segment covering 1-17 has biased composition (polar residues); sequence MTIDTTNESDNSPTNSP. The interval 1–21 is disordered; the sequence is MTIDTTNESDNSPTNSPGLEA. Positions 102 to 309 constitute an Alpha-type protein kinase domain; the sequence is RYSAIRKQWT…ICETMDLSNF (208 aa). 279–284 serves as a coordination point for ATP; sequence GDGNLG. Residues 402–411 are compositionally biased toward acidic residues; it reads SEDEEDEEED. A disordered region spans residues 402–446; it reads SEDEEDEEEDYPRSEKSGNSQKSRRSRMSISTRSSGDESASRPRK.

The protein belongs to the protein kinase superfamily. Alpha-type protein kinase family. As to quaternary structure, monomer or homodimer. Interacts with cmd-1 in the presence of Ca(2+).

The catalysed reaction is [translation elongation factor 2] + ATP = [translation elongation factor 2]-phosphate + ADP + H(+). Its activity is regulated as follows. Calcium(2+)/calmodulin dependent activity. Undergoes calcium/calmodulin-dependent intramolecular autophosphorylation, and this results in it becoming partially calcium/calmodulin-independent. Functionally, phosphorylates elongation factor-2 (eEF-2) at two threonine residues that are conserved in all eukaryotes and are located within a GTP-binding domain. Calcium(2+)/calmodulin dependent activity. Inactivates eEF-2 by catalyzing its phosphorylation. eEF-2 catalyzes the movement of the ribosome along mRNA during translation in eukaryotic cells. The sequence is that of Eukaryotic elongation factor 2 kinase (efk-1) from Caenorhabditis elegans.